Here is a 126-residue protein sequence, read N- to C-terminus: Methylglyoxal synthase (126 aa).

The 126-residue stretch at 1 to 126 (MAERQKIALI…ADRLLPVITE (126 aa)) folds into the MGS-like domain. Substrate-binding positions include histidine 12, lysine 16, 38 to 41 (TGTT), and 59 to 60 (SG). Aspartate 65 acts as the Proton donor/acceptor in catalysis. Residue histidine 92 coordinates substrate.

Belongs to the methylglyoxal synthase family.

The enzyme catalyses dihydroxyacetone phosphate = methylglyoxal + phosphate. Functionally, catalyzes the formation of methylglyoxal from dihydroxyacetone phosphate. In Allorhizobium ampelinum (strain ATCC BAA-846 / DSM 112012 / S4) (Agrobacterium vitis (strain S4)), this protein is Methylglyoxal synthase.